The sequence spans 184 residues: TRAF-interacting protein with FHA domain-containing protein A (184 aa).

Position 9 is a phosphothreonine (Thr-9). One can recognise an FHA domain in the interval 47-103; it reads VKFGRNSNMCQYTFQDKQVSRIQFVLQPFKQFNSSVLSFEIKNMSKKTSLMVDNQEL. The tract at residues 152–184 is disordered; sequence NNWPTQNPIPEDGMYSSYFTHRSSPSEMDENEL. Polar residues predominate over residues 168 to 177; the sequence is SYFTHRSSPS.

This sequence belongs to the TIFA family. Homooligomer; homooligomerizes following phosphorylation at Thr-9. Interacts with IRAK1, TRAF2 and TRAF6. Interacts with TIFAB; binding to TIFAB inhibits TRAF6 activation, possibly by inducing a conformational change in TIFA. Interacts with ZCCHC11; binding to ZCCHC11 suppresses the TRAF6-dependent activation of NF-kappa-B. Phosphorylated at Thr-9 following detection of ADP-D-glycero-beta-D-manno-heptose (ADP-Heptose) by ALPK1. Phosphorylation at Thr-9 by ALPK1 leads to the formation of an intermolecular binding between the FHA domain and phosphorylated Thr-9, promoting TIFA oligomerization and TIFA-mediated NF-kappa-B activation. Highly expressed in the spleen and at lower levels in heart, brain, lung, liver, kidney and testes.

The protein resides in the cytoplasm. Adapter molecule that plays a key role in the activation of pro-inflammatory NF-kappa-B signaling following detection of bacterial pathogen-associated molecular pattern metabolites (PAMPs). Promotes activation of an innate immune response by inducing the oligomerization and polyubiquitination of TRAF6, which leads to the activation of TAK1 and IKK through a proteasome-independent mechanism. TIFA-dependent innate immune response is triggered by ADP-D-glycero-beta-D-manno-heptose (ADP-Heptose), a potent PAMP present in all Gram-negative and some Gram-positive bacteria: ADP-Heptose is recognized by ALPK1, which phosphorylates TIFA at Thr-9, leading to TIFA homooligomerization and subsequent activation of pro-inflammatory NF-kappa-B signaling. The sequence is that of TRAF-interacting protein with FHA domain-containing protein A from Mus musculus (Mouse).